We begin with the raw amino-acid sequence, 942 residues long: Envelope glycoprotein (942 aa).

Residues 1-80 (MDAGASYMRL…LLWTNMCVRA (80 aa)) form the signal peptide. Residues Asn-51, Asn-98, Asn-131, Asn-176, Asn-228, Asn-331, Asn-348, Asn-354, Asn-370, Asn-379, Asn-400, Asn-404, Asn-435, Asn-441, Asn-447, Asn-457, Asn-467, Asn-481, Asn-493, Asn-503, Asn-509, Asn-527, and Asn-534 are each glycosylated (N-linked (GlcNAc...) asparagine; by host). Topologically, residues 81–799 (EDYITLISDP…SLKEVFDWSG (719 aa)) are extracellular. A fusion peptide region spans residues 631–651 (GVGLVIMLVIMAIVAAAGASL). Coiled-coil stretches lie at residues 663 to 713 (KAAV…RIML) and 754 to 789 (RELQ…DVWE). Positions 697 to 713 (LEARVARVEAITDRIML) are immunosuppression. The helical transmembrane segment at 800–820 (WFSWLKYIPIIVVGLVGCILI) threads the bilayer. The Cytoplasmic segment spans residues 821 to 942 (RAVICVCQPL…VDCETWGKGD (122 aa)).

The mature envelope protein (Env) consists of a trimer of SU-TM heterodimers attached by noncovalent interactions or by a labile interchain disulfide bond. Post-translationally, specific enzymatic cleavages in vivo yield mature proteins. Envelope glycoproteins are synthesized as an inactive precursor that is N-glycosylated and processed likely by host cell furin or by a furin-like protease in the Golgi to yield the mature SU and TM proteins. The cleavage site between SU and TM requires the minimal sequence [KR]-X-[KR]-R.

It localises to the virion membrane. It is found in the host cell membrane. In terms of biological role, the surface protein (SU) attaches the virus to the host cell by binding to its receptor. This interaction triggers the refolding of the transmembrane protein (TM) and is thought to activate its fusogenic potential by unmasking its fusion peptide. Fusion occurs at the host cell plasma membrane. Functionally, the transmembrane protein (TM) acts as a class I viral fusion protein. Under the current model, the protein has at least 3 conformational states: pre-fusion native state, pre-hairpin intermediate state, and post-fusion hairpin state. During viral and target cell membrane fusion, the coiled coil regions (heptad repeats) assume a trimer-of-hairpins structure, positioning the fusion peptide in close proximity to the C-terminal region of the ectodomain. The formation of this structure appears to drive apposition and subsequent fusion of viral and target cell membranes. Membranes fusion leads to delivery of the nucleocapsid into the cytoplasm. In Caprine arthritis encephalitis virus (strain 63) (CAEV-63), this protein is Envelope glycoprotein (env).